A 1125-amino-acid polypeptide reads, in one-letter code: Exportin-6 (1125 aa).

Ala2 is subject to N-acetylalanine. The 67-residue stretch at 31 to 97 (IEELLNNFAQ…RSCLPKLLLA (67 aa)) folds into the Importin N-terminal domain. Ser199 carries the phosphoserine modification. Phosphothreonine is present on residues Thr201 and Thr204. Phosphoserine occurs at positions 208 and 224.

This sequence belongs to the exportin family. Found in a complex with XPO6, Ran, ACTB and PFN1. Interacts with ACTB. Interacts with ACTB in a RanGTP-dependent manner.

Its subcellular location is the nucleus. It localises to the cytoplasm. Functionally, mediates the nuclear export of actin and profilin-actin complexes in somatic cells. This is Exportin-6 (Xpo6) from Mus musculus (Mouse).